Here is a 207-residue protein sequence, read N- to C-terminus: Chloramphenicol acetyltransferase (207 aa).

Histidine 186 (proton acceptor) is an active-site residue.

It belongs to the chloramphenicol acetyltransferase family. In terms of assembly, homotrimer.

The enzyme catalyses chloramphenicol + acetyl-CoA = chloramphenicol 3-acetate + CoA. Its function is as follows. This enzyme is an effector of chloramphenicol resistance in bacteria. The polypeptide is Chloramphenicol acetyltransferase (Campylobacter coli).